The sequence spans 584 residues: A-type ATP synthase subunit A (584 aa).

Position 234–241 (234–241 (GPFGSGKT)) interacts with ATP.

This sequence belongs to the ATPase alpha/beta chains family. Has multiple subunits with at least A(3), B(3), C, D, E, F, H, I and proteolipid K(x).

It localises to the cell membrane. It catalyses the reaction ATP + H2O + 4 H(+)(in) = ADP + phosphate + 5 H(+)(out). Functionally, component of the A-type ATP synthase that produces ATP from ADP in the presence of a proton gradient across the membrane. The A chain is the catalytic subunit. The polypeptide is A-type ATP synthase subunit A (Methanoculleus marisnigri (strain ATCC 35101 / DSM 1498 / JR1)).